The following is a 157-amino-acid chain: Small ribosomal subunit protein bS16 (157 aa).

A compositionally biased stretch (basic and acidic residues) spans 125–141 (KRKAAKKAAEEAAAKEA). A disordered region spans residues 125 to 157 (KRKAAKKAAEEAAAKEAEAEEAAEDKAEEESAE). The span at 142–157 (EAEEAAEDKAEEESAE) shows a compositional bias: acidic residues.

It belongs to the bacterial ribosomal protein bS16 family.

The chain is Small ribosomal subunit protein bS16 from Corynebacterium kroppenstedtii (strain DSM 44385 / JCM 11950 / CIP 105744 / CCUG 35717).